The chain runs to 256 residues: Hydroxyacylglutathione hydrolase (256 aa).

Zn(2+) is bound by residues H57, H59, D61, H62, H115, D134, and H172.

It belongs to the metallo-beta-lactamase superfamily. Glyoxalase II family. In terms of assembly, monomer. Requires Zn(2+) as cofactor.

The enzyme catalyses an S-(2-hydroxyacyl)glutathione + H2O = a 2-hydroxy carboxylate + glutathione + H(+). Its pathway is secondary metabolite metabolism; methylglyoxal degradation; (R)-lactate from methylglyoxal: step 2/2. Its function is as follows. Thiolesterase that catalyzes the hydrolysis of S-D-lactoyl-glutathione to form glutathione and D-lactic acid. The chain is Hydroxyacylglutathione hydrolase from Rhizobium etli (strain ATCC 51251 / DSM 11541 / JCM 21823 / NBRC 15573 / CFN 42).